A 511-amino-acid chain; its full sequence is Glucans biosynthesis protein G (511 aa).

Positions 1–22 (MMKMRWLSAAVMLTLYTSSSWA) are cleaved as a signal peptide.

It belongs to the OpgD/OpgG family.

The protein localises to the periplasm. The protein operates within glycan metabolism; osmoregulated periplasmic glucan (OPG) biosynthesis. In terms of biological role, involved in the biosynthesis of osmoregulated periplasmic glucans (OPGs). This chain is Glucans biosynthesis protein G, found in Escherichia fergusonii (strain ATCC 35469 / DSM 13698 / CCUG 18766 / IAM 14443 / JCM 21226 / LMG 7866 / NBRC 102419 / NCTC 12128 / CDC 0568-73).